Reading from the N-terminus, the 326-residue chain is Zona pellucida-binding protein 2 (326 aa).

Residues 1 to 20 (MLAWALLSAVLWSLAGVGSA) form the signal peptide. N-linked (GlcNAc...) asparagine glycans are attached at residues asparagine 86, asparagine 220, and asparagine 256.

It belongs to the zona pellucida-binding protein Sp38 family. N-glycosylated.

It localises to the secreted. The protein resides in the cytoplasmic vesicle. The protein localises to the secretory vesicle. It is found in the acrosome. Functionally, is implicated in sperm-oocyte interaction during fertilization. The sequence is that of Zona pellucida-binding protein 2 (Zpbp2) from Rattus norvegicus (Rat).